A 561-amino-acid polypeptide reads, in one-letter code: Type 2 DNA topoisomerase 6 subunit B (561 aa).

ATP contacts are provided by residues Asn-46, Asp-78, Thr-99 to Lys-100, Gly-109 to Ser-116, and Lys-471.

This sequence belongs to the TOP6B family. As to quaternary structure, homodimer. Heterotetramer of two Top6A and two Top6B chains.

The enzyme catalyses ATP-dependent breakage, passage and rejoining of double-stranded DNA.. Functionally, relaxes both positive and negative superturns and exhibits a strong decatenase activity. The chain is Type 2 DNA topoisomerase 6 subunit B from Thermococcus gammatolerans (strain DSM 15229 / JCM 11827 / EJ3).